Consider the following 157-residue polypeptide: DNA gyrase inhibitor (157 aa).

The protein belongs to the DNA gyrase inhibitor family. As to quaternary structure, interacts with DNA gyrase.

It localises to the cytoplasm. Inhibits the supercoiling activity of DNA gyrase. Acts by inhibiting DNA gyrase at an early step, prior to (or at the step of) binding of DNA by the gyrase. It protects cells against toxins that target DNA gyrase, by inhibiting activity of these toxins and reducing the formation of lethal double-strand breaks in the cell. The chain is DNA gyrase inhibitor from Cronobacter sakazakii (strain ATCC BAA-894) (Enterobacter sakazakii).